Here is a 670-residue protein sequence, read N- to C-terminus: Solute carrier organic anion transporter family member 1A6 (670 aa).

Topologically, residues 1–20 (MGEPGKRVGIHRVRCFAKIK) are cytoplasmic. Residues 21 to 40 (VFLLALIWAYISKILSGVYM) traverse the membrane as a helical segment. At 41-59 (STMLTQLERQFNISTSIVG) the chain is on the extracellular side. Asn52 is a glycosylation site (N-linked (GlcNAc...) asparagine). A helical transmembrane segment spans residues 60–80 (LINGSFEMGNLLVIVFVSYFG). At 81-86 (TKLHRP) the chain is on the cytoplasmic side. A helical transmembrane segment spans residues 87 to 111 (IMIGVGCAVMGLGCFIISLPHFLMG). The Extracellular segment spans residues 112–155 (RYEYETTISPTSNLSSNSFLCVENRSQTLKPTQDPAECVKEIKS). 2 N-linked (GlcNAc...) asparagine glycosylation sites follow: Asn124 and Asn135. The helical transmembrane segment at 156–184 (LMWIYVLVGNIIRGIGETPIMPLGISYIE) threads the bilayer. Residues 185–203 (DFAKSENSPLYIGILEVGK) are Cytoplasmic-facing. The helical transmembrane segment at 204-224 (MIGPILGYLMGPFCANIYVDT) threads the bilayer. Topologically, residues 225-242 (GSVNTDDLTITPTDTRWV) are extracellular. A helical membrane pass occupies residues 243-267 (GAWWIGFLVCAGVNVLTSIPFFFFP). Over 268–311 (KTLPKEGLQDNGDGTENAKEEKHRDKAKEENQGIIKEFFLMMKN) the chain is Cytoplasmic. A helical transmembrane segment spans residues 312–333 (LFCNPIYMLCVLTSVLQVNGVA). Residues 334-353 (NIVIYKPKYLEHHFGISTAK) lie on the Extracellular side of the membrane. The chain crosses the membrane as a helical span at residues 354–377 (AVFLIGLYTTPSVSAGYLISGFIM). The Cytoplasmic segment spans residues 378-381 (KKLK). Residues 382 to 405 (ITLKKAAIIALCLFMSECLLSLCN) traverse the membrane as a helical segment. The Extracellular portion of the chain corresponds to 406 to 513 (FMLTCDTTPI…PDCANKLQYF (108 aa)). The 56-residue stretch at 433–488 (NKFLSDCNTRCNCLTKTWDPVCGNNGLAYMSPCLAGCEKSVGTGANMVFQNCSCIR) folds into the Kazal-like domain. 3 cysteine pairs are disulfide-bonded: Cys439–Cys469, Cys445–Cys465, and Cys454–Cys486. N-linked (GlcNAc...) asparagine glycosylation is found at Asn483 and Asn492. A helical transmembrane segment spans residues 514–536 (LIITVFCCFFYSLATIPGYMVFL). The Cytoplasmic segment spans residues 537–545 (RCMKSEEKS). A helical transmembrane segment spans residues 546 to 571 (LGIGLQAFFMRLFAGIPAPIYFGALI). At 572 to 605 (DRTCLHWGTLKCGEPGACRTYEVSSFRRLYLGLP) the chain is on the extracellular side. The chain crosses the membrane as a helical span at residues 606–623 (AALRGSIILPSFFILRLI). Topologically, residues 624-670 (RKLQIPGDTDSSEIELAETKPTEKESECTDMHKSSKVENDGELKTKL) are cytoplasmic. Phosphothreonine is present on Thr632. The disordered stretch occupies residues 633–670 (DSSEIELAETKPTEKESECTDMHKSSKVENDGELKTKL). 2 positions are modified to phosphoserine: Ser634 and Ser635. Residues 640–670 (AETKPTEKESECTDMHKSSKVENDGELKTKL) are compositionally biased toward basic and acidic residues.

This sequence belongs to the organo anion transporter (TC 2.A.60) family. As to expression, kidney specific.

The protein localises to the cell membrane. Functionally, may mediate the Na(+)-independent transport of organic anions. The chain is Solute carrier organic anion transporter family member 1A6 (Slco1a6) from Mus musculus (Mouse).